Consider the following 837-residue polypeptide: Translation initiation factor IF-2 (837 aa).

The interval 94–253 is disordered; it reads KRSPDEIEAE…QHGFQNPTGP (160 aa). The span at 95–148 shows a compositional bias: basic and acidic residues; that stretch reads RSPDEIEAERQRELEEQRAAEEAERLKAEEAAARQRAEEEARKAEEAARAKAAE. A compositionally biased stretch (low complexity) spans 149–171; sequence EAVSAQPAAAVEVAAAEPVAKPA. Basic and acidic residues-rich tracts occupy residues 172–188 and 220–229; these read AAEE…PKRD and STDEESDGYR. Residues 230–244 show a composition bias toward basic residues; it reads RGGRGGKSKLKKRNQ. Residues 337-506 enclose the tr-type G domain; sequence TRAPVVTVMG…LLQAEVLELK (170 aa). Residues 346-353 form a G1 region; the sequence is GHVDHGKT. 346–353 is a GTP binding site; sequence GHVDHGKT. The segment at 371-375 is G2; the sequence is GITQH. Residues 392–395 form a G3 region; that stretch reads DTPG. Residues 392 to 396 and 446 to 449 contribute to the GTP site; these read DTPGH and NKID. Residues 446–449 form a G4 region; sequence NKID. A G5 region spans residues 482-484; the sequence is SAK.

This sequence belongs to the TRAFAC class translation factor GTPase superfamily. Classic translation factor GTPase family. IF-2 subfamily.

It localises to the cytoplasm. One of the essential components for the initiation of protein synthesis. Protects formylmethionyl-tRNA from spontaneous hydrolysis and promotes its binding to the 30S ribosomal subunits. Also involved in the hydrolysis of GTP during the formation of the 70S ribosomal complex. This chain is Translation initiation factor IF-2, found in Pseudomonas paraeruginosa (strain DSM 24068 / PA7) (Pseudomonas aeruginosa (strain PA7)).